The primary structure comprises 721 residues: Putative cullin-like protein 1 (721 aa).

One can recognise a Cullin neddylation domain in the interval 651-713 (DRRYAIDAAL…RDYLERDTEN (63 aa)).

Belongs to the cullin family.

The protein is Putative cullin-like protein 1 of Arabidopsis thaliana (Mouse-ear cress).